We begin with the raw amino-acid sequence, 364 residues long: Lysophosphatidic acid receptor 1 (364 aa).

The Extracellular portion of the chain corresponds to 1-50 (MAAAFTSSPVVSQPQFTAMNEQQCFSNESIAFFYNRSGKYLATEWNTVTK). 2 disulfide bridges follow: Cys24–Cys190 and Cys188–Cys195. N-linked (GlcNAc...) asparagine glycosylation is found at Asn27 and Asn35. Position 39 (Lys39) interacts with a 1-acyl-sn-glycero-3-phosphate. A helical membrane pass occupies residues 51–75 (LVMGLGITVCIFIMLANLLVMVAIY). Residues 76-83 (VNRRFHFP) are Cytoplasmic-facing. The helical transmembrane segment at 84–107 (IYYLMANLAAADFFAGLAYFYLMF) threads the bilayer. At 108–121 (NTGPNTRRLTVSTW) the chain is on the extracellular side. A helical membrane pass occupies residues 122-144 (LLRQGLIDTSLTVSVANLLAIAI). 124 to 129 (RQGLID) is a binding site for a 1-acyl-sn-glycero-3-phosphate. Topologically, residues 145–163 (ERHITVFRMQLHARMSNRR) are cytoplasmic. A helical membrane pass occupies residues 164–184 (VVVVIVVIWTMAIVMGAIPSV). The Extracellular portion of the chain corresponds to 185–204 (GWNCICDIENCSNMAPLYSD). A helical membrane pass occupies residues 205-225 (SYLVFWAIFNLVTFVVMVVLY). Trp210 serves as a coordination point for a 1-acyl-sn-glycero-3-phosphate. Topologically, residues 226–255 (AHIFGYVRQRTMRMSRHSSGPRRNRDTMMS) are cytoplasmic. The chain crosses the membrane as a helical span at residues 256–280 (LLKTVVIVLGAFIICWTPGLVLLLL). Over 281-294 (DVCCPQCDVLAYEK) the chain is Extracellular. An intrachain disulfide couples Cys284 to Cys287. A helical transmembrane segment spans residues 295 to 315 (FFLLLAEFNSAMNPIIYSYRD). Topologically, residues 316 to 364 (KEMSATFRQILCCQRSENTSGPTEGSDRSASSLNHTILAGVHSNDHSVV) are cytoplasmic. The residue at position 341 (Ser341) is a Phosphoserine. At Thr351 the chain carries Phosphothreonine.

The protein belongs to the G-protein coupled receptor 1 family. Interacts with RALA and GRK2. Interacts with GNAQ and GNA13. Interacts with CD14; the interaction is enhanced by exposure to bacterial lipopolysaccharide (LPS). Post-translationally, N-glycosylated.

It is found in the cell surface. The protein resides in the cell membrane. It localises to the endosome. Its function is as follows. Receptor for lysophosphatidic acid (LPA). Plays a role in the reorganization of the actin cytoskeleton, cell migration, differentiation and proliferation, and thereby contributes to the responses to tissue damage and infectious agents. Activates downstream signaling cascades via the G(i)/G(o), G(12)/G(13), and G(q) families of heteromeric G proteins. Signaling inhibits adenylyl cyclase activity and decreases cellular cAMP levels. Signaling triggers an increase of cytoplasmic Ca(2+) levels. Activates RALA; this leads to the activation of phospholipase C (PLC) and the formation of inositol 1,4,5-trisphosphate. Signaling mediates activation of down-stream MAP kinases. Contributes to the regulation of cell shape. Promotes Rho-dependent reorganization of the actin cytoskeleton in neuronal cells and neurite retraction. Promotes the activation of Rho and the formation of actin stress fibers. Promotes formation of lamellipodia at the leading edge of migrating cells via activation of RAC1. Through its function as LPA receptor, plays a role in chemotaxis and cell migration, including responses to injury and wounding. Plays a role in triggering inflammation in response to bacterial lipopolysaccharide (LPS) via its interaction with CD14. Promotes cell proliferation in response to LPA. Inhibits the intracellular ciliogenesis pathway in response to LPA and through AKT1 activation. Required for normal skeleton development. May play a role in osteoblast differentiation. Required for normal brain development. Required for normal proliferation, survival and maturation of newly formed neurons in the adult dentate gyrus. Plays a role in pain perception and in the initiation of neuropathic pain. The polypeptide is Lysophosphatidic acid receptor 1 (LPAR1) (Bos taurus (Bovine)).